Consider the following 353-residue polypeptide: Photosystem II protein D1 (353 aa).

The residue at position 2 (Thr2) is an N-acetylthreonine. Position 2 is a phosphothreonine (Thr2). The next 3 membrane-spanning stretches (helical) occupy residues 29–46 (YIGWFGVLMIPTLLTATS), 118–133 (HFLLGVACYMGREWEL), and 142–156 (WIAVAYSAPVAAATA). Residue His118 participates in chlorophyll a binding. Tyr126 is a pheophytin a binding site. Residues Asp170 and Glu189 each contribute to the [CaMn4O5] cluster site. A helical transmembrane segment spans residues 197-218 (FHMLGVAGVFGGSLFSAMHGSL). His198 contacts chlorophyll a. A quinone is bound by residues His215 and 264–265 (SF). Fe cation is bound at residue His215. His272 lines the Fe cation pocket. Residues 274–288 (FLAAWPVVGIWFTAL) form a helical membrane-spanning segment. [CaMn4O5] cluster-binding residues include His332, Glu333, Asp342, and Ala344. A propeptide spanning residues 345–353 (AVEAPAVNG) is cleaved from the precursor.

It belongs to the reaction center PufL/M/PsbA/D family. As to quaternary structure, PSII is composed of 1 copy each of membrane proteins PsbA, PsbB, PsbC, PsbD, PsbE, PsbF, PsbH, PsbI, PsbJ, PsbK, PsbL, PsbM, PsbT, PsbX, PsbY, PsbZ, Psb30/Ycf12, at least 3 peripheral proteins of the oxygen-evolving complex and a large number of cofactors. It forms dimeric complexes. Requires The D1/D2 heterodimer binds P680, chlorophylls that are the primary electron donor of PSII, and subsequent electron acceptors. It shares a non-heme iron and each subunit binds pheophytin, quinone, additional chlorophylls, carotenoids and lipids. D1 provides most of the ligands for the Mn4-Ca-O5 cluster of the oxygen-evolving complex (OEC). There is also a Cl(-1) ion associated with D1 and D2, which is required for oxygen evolution. The PSII complex binds additional chlorophylls, carotenoids and specific lipids. as cofactor. Post-translationally, tyr-161 forms a radical intermediate that is referred to as redox-active TyrZ, YZ or Y-Z. In terms of processing, C-terminally processed by CTPA; processing is essential to allow assembly of the oxygen-evolving complex and thus photosynthetic growth.

The protein resides in the plastid. It is found in the chloroplast thylakoid membrane. The enzyme catalyses 2 a plastoquinone + 4 hnu + 2 H2O = 2 a plastoquinol + O2. In terms of biological role, photosystem II (PSII) is a light-driven water:plastoquinone oxidoreductase that uses light energy to abstract electrons from H(2)O, generating O(2) and a proton gradient subsequently used for ATP formation. It consists of a core antenna complex that captures photons, and an electron transfer chain that converts photonic excitation into a charge separation. The D1/D2 (PsbA/PsbD) reaction center heterodimer binds P680, the primary electron donor of PSII as well as several subsequent electron acceptors. This Marchantia polymorpha (Common liverwort) protein is Photosystem II protein D1.